The chain runs to 72 residues: UPF0352 protein HI_0840 (72 aa).

This sequence belongs to the UPF0352 family.

This Haemophilus influenzae (strain ATCC 51907 / DSM 11121 / KW20 / Rd) protein is UPF0352 protein HI_0840.